The following is a 34-amino-acid chain: Trypsin inhibitor (34 aa).

2 disulfide bridges follow: C7-C29 and C11-C25.

Its subcellular location is the secreted. Inhibits trypsin. The polypeptide is Trypsin inhibitor (Veronica hederifolia (Ivy-leaved speedwell)).